Consider the following 168-residue polypeptide: Photosystem I assembly protein Ycf3 (168 aa).

TPR repeat units lie at residues alanine 35–proline 68, serine 72–leucine 105, and glycine 120–asparagine 153.

This sequence belongs to the Ycf3 family.

The protein resides in the plastid. It is found in the chloroplast thylakoid membrane. Functionally, essential for the assembly of the photosystem I (PSI) complex. May act as a chaperone-like factor to guide the assembly of the PSI subunits. This Solanum tuberosum (Potato) protein is Photosystem I assembly protein Ycf3.